Here is a 185-residue protein sequence, read N- to C-terminus: Elongation factor P (185 aa).

The protein belongs to the elongation factor P family.

The protein resides in the cytoplasm. It functions in the pathway protein biosynthesis; polypeptide chain elongation. Involved in peptide bond synthesis. Stimulates efficient translation and peptide-bond synthesis on native or reconstituted 70S ribosomes in vitro. Probably functions indirectly by altering the affinity of the ribosome for aminoacyl-tRNA, thus increasing their reactivity as acceptors for peptidyl transferase. The sequence is that of Elongation factor P from Lactococcus lactis subsp. cremoris (strain MG1363).